The primary structure comprises 1692 residues: Fatty acid synthase alpha subunit hexA (1692 aa).

Residues 44–80 (AVEEPVDETPAPETAPERPPLSRAKTAAVKPQETAAP) are disordered. One can recognise a Carrier domain in the interval 90-174 (LSAEEIVRAL…RVSSALLSKL (85 aa)). An O-(pantetheine 4'-phosphoryl)serine modification is found at Ser125. Residues 508 to 746 (FAGKNILITG…IAMLMTPELV (239 aa)) are ketoreductase (KR) domain. The region spanning 948-1430 (KEYLHEVAVE…QKGGQVVGVA (483 aa)) is the Ketosynthase family 3 (KS3) domain. The active-site For beta-ketoacyl synthase activity is Cys1135. The interval 1263 to 1287 (GQAQLDKSSPSTNTTSRTSSVSLAR) is disordered. Low complexity predominate over residues 1270–1284 (SSPSTNTTSRTSSVS). Catalysis depends on for beta-ketoacyl synthase activity residues His1315 and His1356. A Mg(2+)-binding site is contributed by Asp1569. Acetyl-CoA contacts are provided by residues 1569–1571 (DLV), 1615–1625 (EAVFKCLHTQT), 1639–1642 (KSDN), and 1668–1670 (ISH). Position 1669 (Ser1669) interacts with Mg(2+).

Belongs to the thiolase-like superfamily. Fungal fatty acid synthetase subunit alpha family. In terms of assembly, [Alpha(6)beta(6)] hexamers of two multifunctional subunits (alpha and beta). In terms of processing, 4'-phosphopantetheine is transferred from CoA to a specific serine of the acyl carrier domain by the C-terminal PPT domain. This modification is essential for activity because fatty acids are bound in thioester linkage to the sulfhydryl of the prosthetic group.

The enzyme catalyses acetyl-CoA + n malonyl-CoA + 2n NADPH + 4n H(+) = a long-chain-acyl-CoA + n CoA + n CO2 + 2n NADP(+).. It catalyses the reaction a fatty acyl-[ACP] + malonyl-[ACP] + H(+) = a 3-oxoacyl-[ACP] + holo-[ACP] + CO2. The catalysed reaction is a (3R)-hydroxyacyl-[ACP] + NADP(+) = a 3-oxoacyl-[ACP] + NADPH + H(+). It participates in mycotoxin biosynthesis. In terms of biological role, fatty acid synthase alpha subunit; part of the fragmented gene cluster that mediates the biosynthesis of dothistromin (DOTH), a polyketide toxin very similar in structure to the aflatoxin precursor, versicolorin B. The first step of the pathway is the conversion of acetate to norsolorinic acid (NOR) and requires the fatty acid synthase subunits hexA and hexB, as well as the polyketide synthase pksA. PksA combines a hexanoyl starter unit and 7 malonyl-CoA extender units to synthesize the precursor NOR. The hexanoyl starter unit is provided to the acyl-carrier protein (ACP) domain by the fungal fatty acid synthase hexA/hexB. The second step is the conversion of NOR to averantin (AVN) and requires the norsolorinic acid ketoreductase nor1, which catalyzes the dehydration of norsolorinic acid to form (1'S)-averantin. The cytochrome P450 monooxygenase avnA then catalyzes the hydroxylation of AVN to 5'hydroxyaverantin (HAVN). The next step is performed by adhA that transforms HAVN to averufin (AVF). Averufin might then be converted to hydroxyversicolorone by cypX and avfA. Hydroxyversicolorone is further converted versiconal hemiacetal acetate (VHA) by moxY. VHA is then the substrate for the versiconal hemiacetal acetate esterase est1 to yield versiconal (VAL). Versicolorin B synthase vbsA then converts VAL to versicolorin B (VERB) by closing the bisfuran ring. Then, the activity of the versicolorin B desaturase verB leads to versicolorin A (VERA). DotB, a predicted chloroperoxidase, may perform epoxidation of the A-ring of VERA. Alternatively, a cytochrome P450, such as cypX or avnA could catalyze this step. It is also possible that another, uncharacterized, cytochrome P450 enzyme is responsible for this step. Opening of the epoxide could potentially be achieved by the epoxide hydrolase epoA. However, epoA seems not to be required for DOTH biosynthesis, but other epoxide hydrolases may have the ability to complement this hydrolysis. Alternatively, opening of the epoxide ring could be achieved non-enzymatically. The next step is the deoxygenation of ring A to yield the 5,8-dihydroxyanthraquinone which is most likely catalyzed by the NADPH dehydrogenase encoded by ver1. The last stages of DOTH biosynthesis are proposed to involve hydroxylation of the bisfuran. OrdB and norB might have oxidative roles here. An alternative possibility is that cytochrome P450 monoogenases such as avnA and cypX might perform these steps in addition to previously proposed steps. This is Fatty acid synthase alpha subunit hexA from Dothistroma septosporum (strain NZE10 / CBS 128990) (Red band needle blight fungus).